The primary structure comprises 235 residues: MPSSAHLQDPPPHLSRTLTQDEEQTSLRQSSSCGPSTTSASASESLSGSTKSRISQKKLLEGMLPKIIPTESAAKLLCCYAVFMALTVVVIALSIALSVKKTPQISAVNTYAACQRNWIGFGNKCYYFNETARNWTFSQTLCKEQEAELARFDNEEELNFLKRYKGSSGYWIGLHRESSADPWKWTDNTAYNNLVPIKGEEKHGFLSDNGLSSGKDYIKRKSICSKLNSYTSQCP.

The segment at 1–50 (MPSSAHLQDPPPHLSRTLTQDEEQTSLRQSSSCGPSTTSASASESLSGST) is disordered. The Cytoplasmic segment spans residues 1 to 75 (MPSSAHLQDP…KIIPTESAAK (75 aa)). A compositionally biased stretch (low complexity) spans 30-50 (SSSCGPSTTSASASESLSGST). The helical; Signal-anchor for type II membrane protein transmembrane segment at 76–96 (LLCCYAVFMALTVVVIALSIA) threads the bilayer. Residues 97-235 (LSVKKTPQIS…KLNSYTSQCP (139 aa)) lie on the Extracellular side of the membrane. The 112-residue stretch at 121–232 (FGNKCYYFNE…ICSKLNSYTS (112 aa)) folds into the C-type lectin domain. Residue N134 is glycosylated (N-linked (GlcNAc...) asparagine).

The protein resides in the cell membrane. Functionally, lectin-type cell surface receptor. The sequence is that of C-type lectin domain family 2 member D-related protein from Rattus norvegicus (Rat).